Here is a 626-residue protein sequence, read N- to C-terminus: Division abnormally delayed protein (626 aa).

Positions 1–26 are cleaved as a signal peptide; the sequence is MAARSVRLAQLLLFTLLCGFVGLSAA. A compositionally biased stretch (basic residues) spans 41 to 52; the sequence is LHSATTHHRRRL. The segment at 41-65 is disordered; that stretch reads LHSATTHHRRRLQRDSRAKDAVGGS. Residue asparagine 97 is glycosylated (N-linked (GlcNAc...) asparagine; atypical). 3 N-linked (GlcNAc...) asparagine glycosylation sites follow: asparagine 101, asparagine 150, and asparagine 187. The disordered stretch occupies residues 533-607; the sequence is NSIQATHDIQ…GKTSGSNPLE (75 aa). 4 O-linked (Xyl...) (heparan sulfate) serine glycosylation sites follow: serine 549, serine 569, serine 573, and serine 601. Over residues 565-575 the composition is skewed to gly residues; it reads GAHGSGDGSGD. Glycine 602 is lipidated: GPI-anchor amidated glycine. Positions 603–626 are cleaved as a propeptide — removed in mature form; that stretch reads SNPLEGTATWMLLTLVTMLFSSCS.

The protein belongs to the glypican family. In terms of assembly, interacts with nord; the interaction promotes dally degradation. Interacts with Magu. As part of the dally/ Magu complex, associates with fwe (isoforms ubi, LoseA and LoseB) and is unable to interact with fwe independently of Magu.

It is found in the cell membrane. Its function is as follows. Cell surface proteoglycan that bears heparan sulfate. Functions as a coreceptor for growth factors and morphogens, such as the products of dpp, to regulate signaling and distribution of these ligands. Required for cell division patterning during postembryonic development of the nervous system. Plays a role in dpp/BMP signaling possibly by stabilizing dpp and thereby creating a morphological gradient during wing development. Might have a role in testis development. Functions with magu and fwe in a mechanism of scaling, which utilises apoptosis to ensure that the dpp patterning gradient remains proportional to the size of the growing wing. In this mechanism, fwe represses dally and Magu-dependent activity in expanding the gradient, and dally/Magu inhibits fwe-dependent apoptosis to keep cell death rate low. When the levels of these different proteins are optimally regulated the gradient correctly scales with organ growth but when this fails, fwe-mediated apoptosis is activated to trim the developing tissue to match the correct size of the gradient. The chain is Division abnormally delayed protein (dally) from Drosophila melanogaster (Fruit fly).